A 76-amino-acid polypeptide reads, in one-letter code: Conotoxin MaIr332 (76 aa).

The first 21 residues, 1 to 21 (MKLTCVIVAVLFLTAWTFVTA), serve as a signal peptide directing secretion. A propeptide spanning residues 22–48 (DDSGNGLENLFSKAHHEMKNPKDSKLN) is cleaved from the precursor. 3 disulfide bridges follow: cysteine 51–cysteine 66, cysteine 58–cysteine 70, and cysteine 65–cysteine 75.

This sequence belongs to the conotoxin O1 superfamily. Expressed by the venom duct.

The protein localises to the secreted. The polypeptide is Conotoxin MaIr332 (Conus marmoreus (Marble cone)).